Reading from the N-terminus, the 468-residue chain is Methylenetetrahydrofolate--tRNA-(uracil-5-)-methyltransferase TrmFO (468 aa).

13 to 18 lines the FAD pocket; the sequence is GGGLAG.

It belongs to the MnmG family. TrmFO subfamily. FAD is required as a cofactor.

It is found in the cytoplasm. It catalyses the reaction uridine(54) in tRNA + (6R)-5,10-methylene-5,6,7,8-tetrahydrofolate + NADH + H(+) = 5-methyluridine(54) in tRNA + (6S)-5,6,7,8-tetrahydrofolate + NAD(+). It carries out the reaction uridine(54) in tRNA + (6R)-5,10-methylene-5,6,7,8-tetrahydrofolate + NADPH + H(+) = 5-methyluridine(54) in tRNA + (6S)-5,6,7,8-tetrahydrofolate + NADP(+). Its function is as follows. Catalyzes the folate-dependent formation of 5-methyl-uridine at position 54 (M-5-U54) in all tRNAs. This Bartonella henselae (strain ATCC 49882 / DSM 28221 / CCUG 30454 / Houston 1) (Rochalimaea henselae) protein is Methylenetetrahydrofolate--tRNA-(uracil-5-)-methyltransferase TrmFO.